Reading from the N-terminus, the 488-residue chain is Ribulose bisphosphate carboxylase large chain (488 aa).

2 residues coordinate substrate: N127 and T177. K179 (proton acceptor) is an active-site residue. A substrate-binding site is contributed by K181. Mg(2+)-binding residues include K205, D207, and E208. K205 is modified (N6-carboxylysine). H297 acts as the Proton acceptor in catalysis. Substrate-binding residues include R298, H330, and S382.

It belongs to the RuBisCO large chain family. Type I subfamily. In terms of assembly, heterohexadecamer of 8 large chains and 8 small chains. Mg(2+) serves as cofactor.

It localises to the plastid. Its subcellular location is the chloroplast. The enzyme catalyses 2 (2R)-3-phosphoglycerate + 2 H(+) = D-ribulose 1,5-bisphosphate + CO2 + H2O. The catalysed reaction is D-ribulose 1,5-bisphosphate + O2 = 2-phosphoglycolate + (2R)-3-phosphoglycerate + 2 H(+). In terms of biological role, ruBisCO catalyzes two reactions: the carboxylation of D-ribulose 1,5-bisphosphate, the primary event in carbon dioxide fixation, as well as the oxidative fragmentation of the pentose substrate in the photorespiration process. Both reactions occur simultaneously and in competition at the same active site. This chain is Ribulose bisphosphate carboxylase large chain, found in Rhodomonas salina (Cryptomonas salina).